The primary structure comprises 270 residues: tRNA pseudouridine synthase A (270 aa).

Asp-60 acts as the Nucleophile in catalysis. The RNA binding stretch occupies residues 107–111; it reads FHARF. Tyr-118 is a binding site for substrate. Positions 168–172 are interaction with tRNA; the sequence is QCQSR.

The protein belongs to the tRNA pseudouridine synthase TruA family. As to quaternary structure, homodimer.

The catalysed reaction is uridine(38/39/40) in tRNA = pseudouridine(38/39/40) in tRNA. In terms of biological role, formation of pseudouridine at positions 38, 39 and 40 in the anticodon stem and loop of transfer RNAs. This is tRNA pseudouridine synthase A from Klebsiella pneumoniae subsp. pneumoniae (strain ATCC 700721 / MGH 78578).